A 328-amino-acid polypeptide reads, in one-letter code: MKSNRIFISWLRWPLFIRIGVIILCLILLFGQIIYILEPKQFTSVFEGIWWAVVTVSTVGYGDYVPHTPLGQAAGILLILSGASFVTAYFATLSAAAFSRQHRYIEGKVAYKGRDHIILIGWNEKTNRLLKDLQLAAPSKTVVLIDESLTEGPLIENVHFIRGHAADDGTLKRANITEAESVMITADQYKSETDADMLSVLTLLSVKGLNPLAYCIVEILTDRFVTNAERAGANQIIGTSEFISRAMLQHYQVKLRPSKQQNGIKLTLDQHVELLAVPDELKGAAYKTCVLYFLDHNTTIIGIQKKEGPMLSPPLTYKVLETDQFLAI.

3 consecutive transmembrane segments (helical) span residues 19 to 39, 42 to 62, and 73 to 93; these read IGVI…ILEP, FTSV…VGYG, and AAGI…FATL. One can recognise an RCK N-terminal domain in the interval 114-238; sequence RDHIILIGWN…ERAGANQIIG (125 aa).

The protein resides in the cell membrane. This is Putative potassium channel protein YugO (yugO) from Bacillus subtilis (strain 168).